A 321-amino-acid polypeptide reads, in one-letter code: Lipoyl synthase (321 aa).

Residues Cys68, Cys73, Cys79, Cys94, Cys98, Cys101, and Ser308 each contribute to the [4Fe-4S] cluster site. One can recognise a Radical SAM core domain in the interval 80 to 297 (FNHGTATFMI…KALADELGFT (218 aa)).

The protein belongs to the radical SAM superfamily. Lipoyl synthase family. It depends on [4Fe-4S] cluster as a cofactor.

It localises to the cytoplasm. The enzyme catalyses [[Fe-S] cluster scaffold protein carrying a second [4Fe-4S](2+) cluster] + N(6)-octanoyl-L-lysyl-[protein] + 2 oxidized [2Fe-2S]-[ferredoxin] + 2 S-adenosyl-L-methionine + 4 H(+) = [[Fe-S] cluster scaffold protein] + N(6)-[(R)-dihydrolipoyl]-L-lysyl-[protein] + 4 Fe(3+) + 2 hydrogen sulfide + 2 5'-deoxyadenosine + 2 L-methionine + 2 reduced [2Fe-2S]-[ferredoxin]. The protein operates within protein modification; protein lipoylation via endogenous pathway; protein N(6)-(lipoyl)lysine from octanoyl-[acyl-carrier-protein]: step 2/2. In terms of biological role, catalyzes the radical-mediated insertion of two sulfur atoms into the C-6 and C-8 positions of the octanoyl moiety bound to the lipoyl domains of lipoate-dependent enzymes, thereby converting the octanoylated domains into lipoylated derivatives. The sequence is that of Lipoyl synthase from Shewanella frigidimarina (strain NCIMB 400).